The sequence spans 354 residues: Sulfate/thiosulfate import ATP-binding protein CysA (354 aa).

The ABC transporter domain maps to 3 to 237 (IEVRGLSKRF…PATPFVYGFL (235 aa)). Residue 35–42 (GPSGCGKT) participates in ATP binding.

It belongs to the ABC transporter superfamily. Sulfate/tungstate importer (TC 3.A.1.6) family. In terms of assembly, the complex is composed of two ATP-binding proteins (CysA), two transmembrane proteins (CysT and CysW) and a solute-binding protein (CysP).

The protein localises to the cell inner membrane. It carries out the reaction sulfate(out) + ATP + H2O = sulfate(in) + ADP + phosphate + H(+). The enzyme catalyses thiosulfate(out) + ATP + H2O = thiosulfate(in) + ADP + phosphate + H(+). Functionally, part of the ABC transporter complex CysAWTP involved in sulfate/thiosulfate import. Responsible for energy coupling to the transport system. This Bordetella parapertussis (strain 12822 / ATCC BAA-587 / NCTC 13253) protein is Sulfate/thiosulfate import ATP-binding protein CysA.